We begin with the raw amino-acid sequence, 887 residues long: 3-hydroxy-3-methylglutaryl-coenzyme A reductase (887 aa).

Topologically, residues 1–9 are cytoplasmic; the sequence is MLSRLFRMH. A helical transmembrane segment spans residues 10–39; that stretch reads GLFVASHPWEVIVGTVTLTICMMSMNMFTG. Residues 40 to 56 lie on the Lumenal side of the membrane; it reads NNKICGWNYECPKFEED. A helical transmembrane segment spans residues 57–78; it reads VLSSDIIILTITRCIAILYIYF. Residues 61-218 form the SSD domain; that stretch reads DIIILTITRC…MTFFPACVSL (158 aa). Residues 75-78 carry the INSIG-binding motif motif; the sequence is YIYF. Residues 79–89 are Cytoplasmic-facing; it reads QFQNLRQLGSK. Residue K89 forms a Glycyl lysine isopeptide (Lys-Gly) (interchain with G-Cter in ubiquitin) linkage. The chain crosses the membrane as a helical span at residues 90–114; that stretch reads YILGIAGLFTIFSSFVFSTVVIHFL. Residues 115 to 123 lie on the Lumenal side of the membrane; it reads DKELTGLNE. A helical membrane pass occupies residues 124 to 149; it reads ALPFFLLLIDLSRASALAKFALSSNS. Residues 150-159 are Cytoplasmic-facing; it reads QDEVRENIAR. A helical membrane pass occupies residues 160-187; the sequence is GMAILGPTFTLDALVECLVIGVGTMSGV. Over 188–191 the chain is Lumenal; the sequence is RQLE. A helical transmembrane segment spans residues 192 to 220; sequence IMCCFGCMSVLANYFVFMTFFPACVSLVL. The Cytoplasmic segment spans residues 221–248; sequence ELSRESREGRPIWQLSHFARVLEEEENK. Residue K248 forms a Glycyl lysine isopeptide (Lys-Gly) (interchain with G-Cter in ubiquitin) linkage. Residues 249–275 traverse the membrane as a helical segment; the sequence is PNPVTQRVKMIMSLGLVLVHAHSRWIA. The Lumenal segment spans residues 276 to 314; it reads DPSPQNSTAEQAKVSLGLDEDVSKRIEPSVSLWQFYLSK. N281 is a glycosylation site (N-linked (GlcNAc...) asparagine). A helical transmembrane segment spans residues 315 to 339; the sequence is MISMDIEQVITLSLAFLLAVKYIFF. Over 340–887 the chain is Cytoplasmic; that stretch reads EQAETESTLS…LQGTCTKKAA (548 aa). Catalysis depends on charge relay system residues E558, K690, and D766. H865 acts as the Proton donor in catalysis. The residue at position 871 (S871) is a Phosphoserine.

It belongs to the HMG-CoA reductase family. In terms of assembly, homotetramer. Homodimer. Interacts (via its SSD) with INSIG1; the interaction, accelerated by sterols, leads to the recruitment of HMGCR to AMFR/gp78 for its ubiquitination by the sterol-mediated ERAD pathway. Interacts with UBIAD1. Undergoes sterol-mediated ubiquitination and ER-associated degradation (ERAD). Accumulation of sterols in the endoplasmic reticulum (ER) membrane, triggers binding of the reductase to the ER membrane protein INSIG1 or INSIG2. The INSIG1 binding leads to the recruitment of the ubiquitin ligase, AMFR/gp78, RNF139 or RNF145, initiating ubiquitination of the reductase. The ubiquitinated reductase is then extracted from the ER membrane and delivered to cytosolic 26S proteosomes by a mechanism probably mediated by the ATPase Valosin-containing protein VCP/p97. The INSIG2-binding leads to the recruitment of the ubiquitin ligase RNF139, initiating ubiquitination of the reductase. Lys-248 is the main site of ubiquitination. Ubiquitination is enhanced by the presence of a geranylgeranylated protein. In terms of processing, N-glycosylated. Deglycosylated by NGLY1 on release from the endoplasmic reticulum (ER) in a sterol-mediated manner. Post-translationally, phosphorylated. Phosphorylation at Ser-871 reduces the catalytic activity.

The protein resides in the endoplasmic reticulum membrane. Its subcellular location is the peroxisome membrane. The enzyme catalyses (R)-mevalonate + 2 NADP(+) + CoA = (3S)-3-hydroxy-3-methylglutaryl-CoA + 2 NADPH + 2 H(+). It participates in metabolic intermediate biosynthesis; (R)-mevalonate biosynthesis; (R)-mevalonate from acetyl-CoA: step 3/3. Its activity is regulated as follows. Regulated by a negative feedback mechanism through sterols and non-sterol metabolites derived from mevalonate. Phosphorylation at Ser-871 down-regulates the catalytic activity. Catalyzes the conversion of (3S)-hydroxy-3-methylglutaryl-CoA (HMG-CoA) to mevalonic acid, the rate-limiting step in the synthesis of cholesterol and other isoprenoids, thus plays a critical role in cellular cholesterol homeostasis. The protein is 3-hydroxy-3-methylglutaryl-coenzyme A reductase (Hmgcr) of Mus musculus (Mouse).